The chain runs to 487 residues: Pentatricopeptide repeat-containing protein At5g61370, mitochondrial (487 aa).

The transit peptide at 1-90 (MMSTTVRLNR…TSPRRLLRFF (90 aa)) directs the protein to the mitochondrion. 8 PPR repeats span residues 137 to 171 (DKQT…SCPQ), 172 to 202 (DGFT…HKDV), 207 to 241 (ELSV…GITP), 242 to 283 (DLFC…KIQP), 284 to 318 (TSMS…GCDP), 319 to 353 (DTGS…GFRP), 354 to 388 (ERKF…SVGG), and 389 to 423 (YGQV…DVTL). A disordered region spans residues 466–487 (TKPKLKLKPKRRSKTKKKNLQH).

This sequence belongs to the PPR family. P subfamily.

The protein resides in the mitochondrion. This chain is Pentatricopeptide repeat-containing protein At5g61370, mitochondrial, found in Arabidopsis thaliana (Mouse-ear cress).